The chain runs to 297 residues: uncharacterized protein (297 aa).

This is an uncharacterized protein from Escherichia coli O157:H7.